Consider the following 393-residue polypeptide: Uroporphyrinogen decarboxylase, chloroplastic (393 aa).

The interval Met-1–Val-64 is disordered. Residues Ala-23 to Pro-37 show a composition bias toward low complexity. A compositionally biased stretch (basic and acidic residues) spans Ser-38–Gly-50. Substrate is bound by residues Arg-73–Arg-77, Phe-92, Ser-122, Asp-123, Tyr-200, Ser-255, and His-370.

It belongs to the uroporphyrinogen decarboxylase family. As to quaternary structure, homodimer.

The protein localises to the plastid. The protein resides in the chloroplast. The enzyme catalyses uroporphyrinogen III + 4 H(+) = coproporphyrinogen III + 4 CO2. The protein operates within porphyrin-containing compound metabolism; protoporphyrin-IX biosynthesis; coproporphyrinogen-III from 5-aminolevulinate: step 4/4. Functionally, catalyzes the decarboxylation of four acetate groups of uroporphyrinogen-III to yield coproporphyrinogen-III. This Zea mays (Maize) protein is Uroporphyrinogen decarboxylase, chloroplastic (LES22).